The chain runs to 238 residues: MRPAGRSNNQVRPVTLTRNYTKHAEGSVLVEFGDTKVLCTASIEEGVPRFLKGQGQGWITAEYGMLPRSTHTRNAREAAKGKQGGRTMEIQRLIARALRAAVDLKALGEFTITLDCDVLQADGGTRTASITGACVALADALQKLVENGKLKTNPMKGMVAAVSVGIVNGEAVCDLEYVEDSAAETDMNVVMTEDGRIIEVQGTAEGEPFTHEELLTLLALARGGIESIVATQKAALAN.

Phosphate-binding positions include Arg86 and 124 to 126 (GTR).

It belongs to the RNase PH family. As to quaternary structure, homohexameric ring arranged as a trimer of dimers.

The catalysed reaction is tRNA(n+1) + phosphate = tRNA(n) + a ribonucleoside 5'-diphosphate. Functionally, phosphorolytic 3'-5' exoribonuclease that plays an important role in tRNA 3'-end maturation. Removes nucleotide residues following the 3'-CCA terminus of tRNAs; can also add nucleotides to the ends of RNA molecules by using nucleoside diphosphates as substrates, but this may not be physiologically important. Probably plays a role in initiation of 16S rRNA degradation (leading to ribosome degradation) during starvation. The protein is Ribonuclease PH of Shigella boydii serotype 18 (strain CDC 3083-94 / BS512).